Consider the following 314-residue polypeptide: uncharacterized protein (314 aa).

The protein belongs to the carbohydrate kinase PfkB family.

This is an uncharacterized protein from Buchnera aphidicola subsp. Schizaphis graminum (strain Sg).